The chain runs to 437 residues: 5-hydroxytryptamine receptor 3B (437 aa).

An N-terminal signal peptide occupies residues 1-21; sequence MILLWSCLLVAVVGILGTATP. Residues 22–238 lie on the Extracellular side of the membrane; that stretch reads QPGNSSLHRL…VVIRRCPLAY (217 aa). N-linked (GlcNAc...) asparagine glycosylation is found at asparagine 25, asparagine 92, and asparagine 134. Residues cysteine 151 and cysteine 165 are joined by a disulfide bond. The chain crosses the membrane as a helical span at residues 239-259; it reads VVSLLIPSIFLMLVDLGSFYL. Topologically, residues 260–264 are cytoplasmic; it reads PPNCR. A helical transmembrane segment spans residues 265–282; the sequence is ARIVFKTNVLVGYTVFRV. The N-linked (GlcNAc...) asparagine glycan is linked to asparagine 283. Over 283-292 the chain is Extracellular; sequence NMSDEVPRSA. A helical membrane pass occupies residues 293–313; that stretch reads GCTPLIGVFFTVCMALLVLSL. Topologically, residues 314–410 are cytoplasmic; sequence SKSILLIKFL…WLAILYRFDQ (97 aa). Residues 377 to 409 form an HA-stretch; determines single-channel conductance in 5-HT3 receptors region; that stretch reads FWFQFRSINNSLRTRDQIHQKEVEWLAILYRFD. A helical transmembrane segment spans residues 411 to 431; the sequence is LLFRIYLAVLGLYTVTLCSLW. Residues 432-437 are Extracellular-facing; it reads ALWSRM.

The protein belongs to the ligand-gated ion channel (TC 1.A.9) family. 5-hydroxytryptamine receptor (TC 1.A.9.2) subfamily. HTR3B sub-subfamily. Forms homopentameric as well as heteropentameric serotonin-activated cation-selective channel complexes with HTR3A. The homomeric complex is not functional. Heteropentameric complexes display properties which resemble that of neuronal serotonin-activated channels in vivo. Post-translationally, N-glycosylation is required for membrane localization.

The protein resides in the postsynaptic cell membrane. It localises to the cell membrane. The catalysed reaction is Na(+)(in) = Na(+)(out). The enzyme catalyses K(+)(in) = K(+)(out). It carries out the reaction Ca(2+)(in) = Ca(2+)(out). Its function is as follows. Forms serotonin (5-hydroxytryptamine/5-HT3)-activated cation-selective channel complexes, which when activated cause fast, depolarizing responses in neurons. This chain is 5-hydroxytryptamine receptor 3B, found in Mus musculus (Mouse).